Here is a 567-residue protein sequence, read N- to C-terminus: MDVSTNELAILAIVLLATGVLFYAKGTRRAPLPPGPRGIPFFGNLFQVDAMRPYPQYLKWAQKYGPVVSIKLGGQHVIVLNSSEAADELLVTRSKQYSSRESPHVAFDLVSDQQQMLFMPYGREWKIVRKNVHGLLGPGSSKQMRKMQDLESRVILHDLLCHGETSISEDFVEGPHGEVPERHWFSIIRRYTTSLMMTLMYGHRIHRIVDNPELHQVYAVVSNFTHVSQPGRYLVDVFPVLRRLPDIMAPWRAEGKKMHEWEMGFWGKLFSDSRTALLDGSGLDGFVQSYLRSRAEAGCEDLPGKGVTEDAAGWMRDKLVTYTASGIIEAGSDTTSTAMFSFVLLMLSNPDALQRAKEEMDAVVGSSRMPGWEDEDRLPWLKACIKETLRRAPPLPLGVPHKTEEDDVYNGRLIPKGSTVIGNIWAIHMDPIRYPNPTSFKPERFYHPDEKLDWASGPDTHDRDHYIFGWGRRFCSGKHIAEASLFIVLSRLIWGFDLYTGSDAKTGQARLPDVNDEATFTDGLVAAPKIYPVGFKPRSEKHAEMIKASYRDVQNDWQSMGLAGDER.

The chain crosses the membrane as a helical span at residues 3–23; sequence VSTNELAILAIVLLATGVLFY. 2 N-linked (GlcNAc...) asparagine glycosylation sites follow: N81 and N223. Position 475 (C475) interacts with heme.

This sequence belongs to the cytochrome P450 family. Heme serves as cofactor.

Its subcellular location is the membrane. Its pathway is secondary metabolite biosynthesis. In terms of biological role, cytochrome P450 monooxygenase that is able to use anthracene, carbazole, pyrene, and phenanthrene as substrates for oxidation. These multifunctional properties against a series of polycyclic aromatic hydrocarbons (PAHs) suggest that CYP231 would play important roles, at least in part, in fungal metabolic systems involved in xenobiotic detoxification. This Postia placenta (strain ATCC 44394 / Madison 698-R) (Brown rot fungus) protein is Cytochrome P450 monooxygenase 231.